A 516-amino-acid chain; its full sequence is GMP synthase [glutamine-hydrolyzing] (516 aa).

The Glutamine amidotransferase type-1 domain occupies 8 to 198 (KILILDFGSQ…ALNICKCDAL (191 aa)). Cys84 (nucleophile) is an active-site residue. Catalysis depends on residues His172 and Glu174. In terms of domain architecture, GMPS ATP-PPase spans 199–391 (WNIENIIEND…LGLPYNMLYR (193 aa)). An ATP-binding site is contributed by 226–232 (SGGVDSS).

As to quaternary structure, homodimer.

The catalysed reaction is XMP + L-glutamine + ATP + H2O = GMP + L-glutamate + AMP + diphosphate + 2 H(+). The protein operates within purine metabolism; GMP biosynthesis; GMP from XMP (L-Gln route): step 1/1. Catalyzes the synthesis of GMP from XMP. The protein is GMP synthase [glutamine-hydrolyzing] of Francisella philomiragia subsp. philomiragia (strain ATCC 25017 / CCUG 19701 / FSC 153 / O#319-036).